Here is a 476-residue protein sequence, read N- to C-terminus: RNA-splicing ligase RtcB homolog (476 aa).

Positions 90, 93, 198, 230, and 324 each coordinate Mn(2+). 197-201 (NHYAE) is a GMP binding site. GMP-binding positions include 324-325 (HN), 373-376 (GGTM), Ser380, 399-402 (HGAG), and Lys475. Residue His399 is the GMP-histidine intermediate of the active site.

It belongs to the RtcB family. As to quaternary structure, catalytic component of the tRNA-splicing ligase complex. Requires Mn(2+) as cofactor.

The catalysed reaction is a 3'-end 3'-phospho-ribonucleotide-RNA + a 5'-end dephospho-ribonucleoside-RNA + GTP = a ribonucleotidyl-ribonucleotide-RNA + GMP + diphosphate. It catalyses the reaction a 3'-end 2',3'-cyclophospho-ribonucleotide-RNA + a 5'-end dephospho-ribonucleoside-RNA + GTP + H2O = a ribonucleotidyl-ribonucleotide-RNA + GMP + diphosphate + H(+). Catalytic subunit of the tRNA-splicing ligase complex that acts by directly joining spliced tRNA halves to mature-sized tRNAs by incorporating the precursor-derived splice junction phosphate into the mature tRNA as a canonical 3',5'-phosphodiester. May act as an RNA ligase with broad substrate specificity, and may function toward other RNAs. In Chlamydomonas reinhardtii (Chlamydomonas smithii), this protein is RNA-splicing ligase RtcB homolog.